We begin with the raw amino-acid sequence, 242 residues long: Protein GrpE (242 aa).

Positions 1–10 are enriched in polar residues; the sequence is MAGENSSTET. Residues 1–64 form a disordered region; the sequence is MAGENSSTET…QSTESTSKEK (64 aa). Over residues 11–20 the composition is skewed to basic and acidic residues; sequence KNQEINEKTP. 2 stretches are compositionally biased toward polar residues: residues 21–32 and 40–59; these read EVQTFETNVEFE and DTELSADNASIDTDIQSTES.

This sequence belongs to the GrpE family. As to quaternary structure, homodimer.

It is found in the cytoplasm. Functionally, participates actively in the response to hyperosmotic and heat shock by preventing the aggregation of stress-denatured proteins, in association with DnaK and GrpE. It is the nucleotide exchange factor for DnaK and may function as a thermosensor. Unfolded proteins bind initially to DnaJ; upon interaction with the DnaJ-bound protein, DnaK hydrolyzes its bound ATP, resulting in the formation of a stable complex. GrpE releases ADP from DnaK; ATP binding to DnaK triggers the release of the substrate protein, thus completing the reaction cycle. Several rounds of ATP-dependent interactions between DnaJ, DnaK and GrpE are required for fully efficient folding. This is Protein GrpE from Trichodesmium erythraeum (strain IMS101).